Consider the following 184-residue polypeptide: UPF0316 protein BLi00691/BL01474 (184 aa).

The next 3 membrane-spanning stretches (helical) occupy residues 9–29, 41–61, and 67–87; these read GVIM…FLTL, LAAF…GLVL, and IQNV…GTKI.

Belongs to the UPF0316 family.

The protein resides in the cell membrane. This is UPF0316 protein BLi00691/BL01474 from Bacillus licheniformis (strain ATCC 14580 / DSM 13 / JCM 2505 / CCUG 7422 / NBRC 12200 / NCIMB 9375 / NCTC 10341 / NRRL NRS-1264 / Gibson 46).